A 263-amino-acid chain; its full sequence is MGLMNAFDSQTEDSSPVIGRNLRSRPLARKKLSEMVEEELEQMIRRREFGEGEQLPSERELMAFFNVGRPSVREALAALKRKGLVQINNGERARVSRPSADTIIGELSGMAKDFLSHPGGIAHFEQLRLFFESSLVRYAAEHATDEQIDLLAKALEINSQSLDNNAAFIRSDVDFHRVLAEIPGNPIFMAIHVALLDWLIAARPTVADQALHEHNNVSYQQHIAIVDAIRRHDPDEADRALQSHLNSVSATWHAFGQTTNKKK.

The interval 1 to 21 (MGLMNAFDSQTEDSSPVIGRN) is disordered. In terms of domain architecture, HTH gntR-type spans 30–98 (KKLSEMVEEE…NGERARVSRP (69 aa)). The H-T-H motif DNA-binding region spans 58-77 (ERELMAFFNVGRPSVREALA).

This sequence belongs to the NanR family.

Transcriptional repressor that controls expression of the genes required for the catabolism of sialic acids. This Escherichia coli O7:K1 (strain IAI39 / ExPEC) protein is HTH-type transcriptional repressor NanR.